A 453-amino-acid chain; its full sequence is Pup--protein ligase (453 aa).

Glu9 contacts Mg(2+). Arg53 serves as a coordination point for ATP. Tyr55 is a Mg(2+) binding site. Asp57 serves as the catalytic Proton acceptor. Residue Glu63 participates in Mg(2+) binding. Positions 66 and 420 each coordinate ATP.

The protein belongs to the Pup ligase/Pup deamidase family. Pup-conjugating enzyme subfamily.

The catalysed reaction is ATP + [prokaryotic ubiquitin-like protein]-L-glutamate + [protein]-L-lysine = ADP + phosphate + N(6)-([prokaryotic ubiquitin-like protein]-gamma-L-glutamyl)-[protein]-L-lysine.. It participates in protein degradation; proteasomal Pup-dependent pathway. The protein operates within protein modification; protein pupylation. Functionally, catalyzes the covalent attachment of the prokaryotic ubiquitin-like protein modifier Pup to the proteasomal substrate proteins, thereby targeting them for proteasomal degradation. This tagging system is termed pupylation. The ligation reaction involves the side-chain carboxylate of the C-terminal glutamate of Pup and the side-chain amino group of a substrate lysine. The sequence is that of Pup--protein ligase from Streptomyces griseus subsp. griseus (strain JCM 4626 / CBS 651.72 / NBRC 13350 / KCC S-0626 / ISP 5235).